The chain runs to 146 residues: Large ribosomal subunit protein uL15 (146 aa).

Residues 1–13 show a composition bias toward basic and acidic residues; it reads MKLHELKPSEGSR. The tract at residues 1–57 is disordered; it reads MKLHELKPSEGSRKTRNRVGRGIGSGNGKTAGKGHKGQNARSGGGVRPGFEGGQMPL. Composition is skewed to gly residues over residues 21-31 and 42-52; these read RGIGSGNGKTA and SGGGVRPGFEG.

Belongs to the universal ribosomal protein uL15 family. Part of the 50S ribosomal subunit.

Its function is as follows. Binds to the 23S rRNA. This Bacillus subtilis (strain 168) protein is Large ribosomal subunit protein uL15.